Consider the following 1187-residue polypeptide: BAI1-associated protein 3 (1187 aa).

Residues 55–81 form a disordered region; that stretch reads SFRRRTEQDPGSASADPQEPATGAWKP. A C2 1 domain is found at 176–335; it reads SLEEHTEAIE…VKSARANGTA (160 aa). D211, D217, D295, and D297 together coordinate Ca(2+). The MHD1 domain maps to 663–784; that stretch reads FELYLTLADL…EATLFYTELL (122 aa). In terms of domain architecture, MHD2 spans 888–996; that stretch reads DEAVAPLMKY…CSTRECIEQF (109 aa). In terms of domain architecture, C2 2 spans 1010-1136; it reads RFGRLSVRCH…GVARPQVGGG (127 aa). Residues L1040, D1041, D1047, D1105, D1107, S1110, and D1113 each contribute to the Ca(2+) site.

It belongs to the unc-13 family. As to quaternary structure, interacts with ADGRB1; this interaction is direct. Interacts with endosomal SNARE proteins VAMP3, VAMP4, STX6 and STX16; this interaction is increased in the presence of calcium. The cofactor is Ca(2+). In terms of tissue distribution, predominantly expressed in brain. Also expressed in nonneural tissues such as breast and testes epithelium.

The protein resides in the cytoplasm. Its subcellular location is the cytosol. It is found in the recycling endosome membrane. The protein localises to the late endosome membrane. It localises to the golgi apparatus. The protein resides in the trans-Golgi network membrane. Its subcellular location is the cell membrane. In terms of biological role, functions in endosome to Golgi retrograde transport. In response to calcium influx, may interact with SNARE fusion receptors and membrane phospholipids to mediate endosome fusion with the trans-Golgi network. By promoting the recycling of secretory vesicle transmembrane proteins, it indirectly controls dense-core secretory vesicle biogenesis, maturation and their ability to mediate the constitutive and regulated secretion of neurotransmitters and hormones. May regulate behavior and food intake by controlling calcium-stimulated exocytosis of neurotransmitters including NPY and serotonin and hormones like insulin. Proposed to play a role in hypothalamic neuronal firing by modulating gamma-aminobutyric acid (GABA)ergic inhibitory neurotransmission. The polypeptide is BAI1-associated protein 3 (Homo sapiens (Human)).